The sequence spans 91 residues: Probable Fe(2+)-trafficking protein (91 aa).

The protein belongs to the Fe(2+)-trafficking protein family.

Could be a mediator in iron transactions between iron acquisition and iron-requiring processes, such as synthesis and/or repair of Fe-S clusters in biosynthetic enzymes. The sequence is that of Probable Fe(2+)-trafficking protein from Glaesserella parasuis serovar 5 (strain SH0165) (Haemophilus parasuis).